Reading from the N-terminus, the 214-residue chain is Transcription factor 23 (214 aa).

Disordered stretches follow at residues 1-86 (MSQR…ARER) and 174-214 (DSTT…LGDK). A compositionally biased stretch (basic and acidic residues) spans 40 to 49 (TRQDPWEERS). Residues 76–128 (EASPENAARERSRVRTLRQAFLALQAALPAVPPDTKLSKLDVLVLAASYIAHL) form the bHLH domain. A compositionally biased stretch (polar residues) spans 174 to 183 (DSTTASTPSQ).

Forms inactive heterodimeric complexes with TCF3. In terms of tissue distribution, expressed in liver, kidney and spleen.

The protein resides in the nucleus. In terms of biological role, inhibits E-box-mediated binding and transactivation of bHLH factors. Inhibitory effect is similar to that of ID proteins. Inhibits the formation of TCF3 and MYOD1 homodimers and heterodimers. Lacks DNA binding activity. Seems to play a role in the inhibition of myogenesis. The polypeptide is Transcription factor 23 (TCF23) (Homo sapiens (Human)).